Reading from the N-terminus, the 86-residue chain is Apolipoprotein C-I (86 aa).

Positions 1–26 (MRLFLSLPVLVVALLMILEGPGPAQG) are cleaved as a signal peptide.

Belongs to the apolipoprotein C1 family.

The protein localises to the secreted. Its function is as follows. Inhibitor of lipoprotein binding to the low density lipoprotein (LDL) receptor, LDL receptor-related protein, and very low density lipoprotein (VLDL) receptor. Associates with high density lipoproteins (HDL) and the triacylglycerol-rich lipoproteins in the plasma and makes up about 10% of the protein of the VLDL and 2% of that of HDL. Appears to interfere directly with fatty acid uptake and is also the major plasma inhibitor of cholesteryl ester transfer protein (CETP). Binds free fatty acids and reduces their intracellular esterification. Modulates the interaction of APOE with beta-migrating VLDL and inhibits binding of beta-VLDL to the LDL receptor-related protein. This is Apolipoprotein C-I (APOC1) from Aotus nancymaae (Ma's night monkey).